The sequence spans 538 residues: Chaperonin GroEL (538 aa).

Residues 29–32 (TIGP), 86–90 (DGTTT), glycine 413, 476–478 (NAA), and aspartate 492 contribute to the ATP site.

This sequence belongs to the chaperonin (HSP60) family. Forms a cylinder of 14 subunits composed of two heptameric rings stacked back-to-back. Interacts with the co-chaperonin GroES.

Its subcellular location is the cytoplasm. The catalysed reaction is ATP + H2O + a folded polypeptide = ADP + phosphate + an unfolded polypeptide.. Its function is as follows. Together with its co-chaperonin GroES, plays an essential role in assisting protein folding. The GroEL-GroES system forms a nano-cage that allows encapsulation of the non-native substrate proteins and provides a physical environment optimized to promote and accelerate protein folding. The protein is Chaperonin GroEL of Staphylococcus aureus (strain bovine RF122 / ET3-1).